The following is a 360-amino-acid chain: Photosystem II protein D1 (360 aa).

Transmembrane regions (helical) follow at residues tyrosine 29–serine 46, histidine 118–leucine 133, and tryptophan 142–alanine 156. Histidine 118 contributes to the chlorophyll a binding site. Tyrosine 126 lines the pheophytin a pocket. Positions 170 and 189 each coordinate [CaMn4O5] cluster. A helical transmembrane segment spans residues phenylalanine 197–leucine 218. Position 198 (histidine 198) interacts with chlorophyll a. Residues histidine 215 and serine 264–phenylalanine 265 each bind a quinone. Histidine 215 is a Fe cation binding site. Histidine 272 lines the Fe cation pocket. The helical transmembrane segment at phenylalanine 274–methionine 288 threads the bilayer. Histidine 332, glutamate 333, aspartate 342, and alanine 344 together coordinate [CaMn4O5] cluster. The propeptide occupies alanine 345 to alanine 360.

The protein belongs to the reaction center PufL/M/PsbA/D family. In terms of assembly, PSII is composed of 1 copy each of membrane proteins PsbA, PsbB, PsbC, PsbD, PsbE, PsbF, PsbH, PsbI, PsbJ, PsbK, PsbL, PsbM, PsbT, PsbX, PsbY, PsbZ, Psb30/Ycf12, at least 3 peripheral proteins of the oxygen-evolving complex and a large number of cofactors. It forms dimeric complexes. The D1/D2 heterodimer binds P680, chlorophylls that are the primary electron donor of PSII, and subsequent electron acceptors. It shares a non-heme iron and each subunit binds pheophytin, quinone, additional chlorophylls, carotenoids and lipids. D1 provides most of the ligands for the Mn4-Ca-O5 cluster of the oxygen-evolving complex (OEC). There is also a Cl(-1) ion associated with D1 and D2, which is required for oxygen evolution. The PSII complex binds additional chlorophylls, carotenoids and specific lipids. serves as cofactor. Tyr-161 forms a radical intermediate that is referred to as redox-active TyrZ, YZ or Y-Z. Post-translationally, C-terminally processed by CTPA; processing is essential to allow assembly of the oxygen-evolving complex and thus photosynthetic growth.

It is found in the plastid. The protein localises to the chloroplast thylakoid membrane. It carries out the reaction 2 a plastoquinone + 4 hnu + 2 H2O = 2 a plastoquinol + O2. In terms of biological role, photosystem II (PSII) is a light-driven water:plastoquinone oxidoreductase that uses light energy to abstract electrons from H(2)O, generating O(2) and a proton gradient subsequently used for ATP formation. It consists of a core antenna complex that captures photons, and an electron transfer chain that converts photonic excitation into a charge separation. The D1/D2 (PsbA/PsbD) reaction center heterodimer binds P680, the primary electron donor of PSII as well as several subsequent electron acceptors. This Emiliania huxleyi (Coccolithophore) protein is Photosystem II protein D1.